The primary structure comprises 100 residues: Integration host factor subunit alpha (100 aa).

It belongs to the bacterial histone-like protein family. As to quaternary structure, heterodimer of an alpha and a beta chain.

Functionally, this protein is one of the two subunits of integration host factor, a specific DNA-binding protein that functions in genetic recombination as well as in transcriptional and translational control. Involved in hydrogenase gene expression. This Rhodobacter capsulatus (Rhodopseudomonas capsulata) protein is Integration host factor subunit alpha (ihfA).